Consider the following 281-residue polypeptide: Pantothenate synthetase (281 aa).

M30–H37 is a binding site for ATP. H37 serves as the catalytic Proton donor. Position 61 (Q61) interacts with (R)-pantoate. Residue Q61 coordinates beta-alanine. Residue G147–D150 coordinates ATP. Residue Q153 participates in (R)-pantoate binding. ATP contacts are provided by residues I176 and K184–R187.

It belongs to the pantothenate synthetase family. As to quaternary structure, homodimer.

The protein localises to the cytoplasm. The catalysed reaction is (R)-pantoate + beta-alanine + ATP = (R)-pantothenate + AMP + diphosphate + H(+). Its pathway is cofactor biosynthesis; (R)-pantothenate biosynthesis; (R)-pantothenate from (R)-pantoate and beta-alanine: step 1/1. Its function is as follows. Catalyzes the condensation of pantoate with beta-alanine in an ATP-dependent reaction via a pantoyl-adenylate intermediate. In Clostridium botulinum (strain Kyoto / Type A2), this protein is Pantothenate synthetase.